The sequence spans 468 residues: Ribulose bisphosphate carboxylase large chain (468 aa).

Lys-5 is subject to N6,N6,N6-trimethyllysine. Residues Asn-114 and Thr-164 each contribute to the substrate site. Lys-166 functions as the Proton acceptor in the catalytic mechanism. A substrate-binding site is contributed by Lys-168. Residues Lys-192, Asp-194, and Glu-195 each contribute to the Mg(2+) site. N6-carboxylysine is present on Lys-192. Residue His-285 is the Proton acceptor of the active site. Substrate-binding residues include Arg-286, His-318, and Ser-370.

It belongs to the RuBisCO large chain family. Type I subfamily. As to quaternary structure, heterohexadecamer of 8 large chains and 8 small chains; disulfide-linked. The disulfide link is formed within the large subunit homodimers. Requires Mg(2+) as cofactor. Post-translationally, the disulfide bond which can form in the large chain dimeric partners within the hexadecamer appears to be associated with oxidative stress and protein turnover.

The protein resides in the plastid. Its subcellular location is the chloroplast. The enzyme catalyses 2 (2R)-3-phosphoglycerate + 2 H(+) = D-ribulose 1,5-bisphosphate + CO2 + H2O. It carries out the reaction D-ribulose 1,5-bisphosphate + O2 = 2-phosphoglycolate + (2R)-3-phosphoglycerate + 2 H(+). In terms of biological role, ruBisCO catalyzes two reactions: the carboxylation of D-ribulose 1,5-bisphosphate, the primary event in carbon dioxide fixation, as well as the oxidative fragmentation of the pentose substrate in the photorespiration process. Both reactions occur simultaneously and in competition at the same active site. This chain is Ribulose bisphosphate carboxylase large chain, found in Datura stramonium (Jimsonweed).